The chain runs to 267 residues: 4-hydroxy-tetrahydrodipicolinate reductase (267 aa).

Residues 8 to 13 (GIAGRM), Glu34, 98 to 100 (GST), and 122 to 125 (SPNM) contribute to the NAD(+) site. Catalysis depends on His155, which acts as the Proton donor/acceptor. His156 serves as a coordination point for (S)-2,3,4,5-tetrahydrodipicolinate. The active-site Proton donor is Lys159. 165–166 (GT) is a binding site for (S)-2,3,4,5-tetrahydrodipicolinate.

Belongs to the DapB family.

The protein resides in the cytoplasm. It catalyses the reaction (S)-2,3,4,5-tetrahydrodipicolinate + NAD(+) + H2O = (2S,4S)-4-hydroxy-2,3,4,5-tetrahydrodipicolinate + NADH + H(+). The catalysed reaction is (S)-2,3,4,5-tetrahydrodipicolinate + NADP(+) + H2O = (2S,4S)-4-hydroxy-2,3,4,5-tetrahydrodipicolinate + NADPH + H(+). Its pathway is amino-acid biosynthesis; L-lysine biosynthesis via DAP pathway; (S)-tetrahydrodipicolinate from L-aspartate: step 4/4. Catalyzes the conversion of 4-hydroxy-tetrahydrodipicolinate (HTPA) to tetrahydrodipicolinate. This is 4-hydroxy-tetrahydrodipicolinate reductase from Syntrophobacter fumaroxidans (strain DSM 10017 / MPOB).